Consider the following 1055-residue polypeptide: Vacuolar protein sorting-associated protein 54 (1055 aa).

Residues 363–383 adopt a coiled-coil conformation; it reads TKKIIEVHQKYEQKKHLLAKL. The tract at residues 774–794 is disordered; the sequence is IDDGPTKKPFKRTGSSATIDS.

This sequence belongs to the VPS54 family. In terms of assembly, component of the Golgi-associated retrograde protein (GARP) complex, also called VFT (VPS fifty-three) complex, composed of VPS51, VPS52, VPS53 and VPS54.

The protein localises to the golgi apparatus. It is found in the trans-Golgi network. Functionally, acts as a component of the GARP complex that is involved in retrograde transport from early and late endosomes to the trans-Golgi network (TGN). The GARP complex facilitates tethering as well as SNARE complex assembly at the Golgi. The chain is Vacuolar protein sorting-associated protein 54 (vps-54) from Caenorhabditis briggsae.